The following is a 395-amino-acid chain: Non-homologous end joining protein Ku (395 aa).

In terms of domain architecture, Ku spans 9-181 (ISFGLVSIPI…PPEDAAPDGD (173 aa)). Residues 252–395 (RAARTSRDDE…SASSRKRTSA (144 aa)) are disordered. Polar residues-rich tracts occupy residues 283–292 (SSKTSGQSSG) and 311–320 (GKTVTRSGDS). The segment covering 351–361 (TARKTTAKKTT) has biased composition (basic residues). The segment covering 362–371 (AKGTTGTTAA) has biased composition (low complexity).

The protein belongs to the prokaryotic Ku family. In terms of assembly, homodimer. Interacts with LigD.

Functionally, with LigD forms a non-homologous end joining (NHEJ) DNA repair enzyme, which repairs dsDNA breaks with reduced fidelity. Binds linear dsDNA with 5'- and 3'- overhangs but not closed circular dsDNA nor ssDNA. Recruits and stimulates the ligase activity of LigD. This Streptomyces griseus subsp. griseus (strain JCM 4626 / CBS 651.72 / NBRC 13350 / KCC S-0626 / ISP 5235) protein is Non-homologous end joining protein Ku.